The primary structure comprises 534 residues: Phosphoenolpyruvate carboxykinase (ATP) (534 aa).

Substrate contacts are provided by Arg-60, Tyr-195, and Lys-201. ATP is bound by residues Lys-201, His-221, and 237 to 245; that span reads GLSGTGKTT. Mn(2+)-binding residues include Lys-201 and His-221. A Mn(2+)-binding site is contributed by Asp-258. The ATP site is built by Glu-287, Arg-324, and Thr-449. Arg-324 provides a ligand contact to substrate.

It belongs to the phosphoenolpyruvate carboxykinase (ATP) family. The cofactor is Mn(2+).

It localises to the cytoplasm. The enzyme catalyses oxaloacetate + ATP = phosphoenolpyruvate + ADP + CO2. Its pathway is carbohydrate biosynthesis; gluconeogenesis. Its function is as follows. Involved in the gluconeogenesis. Catalyzes the conversion of oxaloacetate (OAA) to phosphoenolpyruvate (PEP) through direct phosphoryl transfer between the nucleoside triphosphate and OAA. This chain is Phosphoenolpyruvate carboxykinase (ATP), found in Flavobacterium johnsoniae (strain ATCC 17061 / DSM 2064 / JCM 8514 / BCRC 14874 / CCUG 350202 / NBRC 14942 / NCIMB 11054 / UW101) (Cytophaga johnsonae).